The sequence spans 20 residues: Putative phosphoglycerate kinase (20 aa).

The protein belongs to the phosphoglycerate kinase family. Monomer.

It is found in the cytoplasm. The catalysed reaction is (2R)-3-phosphoglycerate + ATP = (2R)-3-phospho-glyceroyl phosphate + ADP. It functions in the pathway carbohydrate degradation; glycolysis; pyruvate from D-glyceraldehyde 3-phosphate: step 2/5. The polypeptide is Putative phosphoglycerate kinase (pgk) (Clostridium pasteurianum).